Consider the following 207-residue polypeptide: Pyrrolidone-carboxylate peptidase (207 aa).

Residues glutamate 80, cysteine 143, and histidine 167 contribute to the active site.

The protein belongs to the peptidase C15 family. In terms of assembly, homotetramer.

Its subcellular location is the cytoplasm. It carries out the reaction Release of an N-terminal pyroglutamyl group from a polypeptide, the second amino acid generally not being Pro.. Removes 5-oxoproline from various penultimate amino acid residues except L-proline. This Coprothermobacter proteolyticus (strain ATCC 35245 / DSM 5265 / OCM 4 / BT) protein is Pyrrolidone-carboxylate peptidase.